Here is an 85-residue protein sequence, read N- to C-terminus: Fungal defensin triintsin (85 aa).

Positions 1-21 (MQFTKLATVLIVSLMGSAAIA) are cleaved as a signal peptide. A propeptide spanning residues 22–47 (APSVDNAPAVAAEEVAAAPAENLEKR) is cleaved from the precursor. 3 disulfides stabilise this stretch: Cys-51-Cys-72, Cys-58-Cys-80, and Cys-62-Cys-82.

The protein belongs to the invertebrate defensin family. In terms of processing, disulfide bonds are essential for antimicrobial activity.

The protein resides in the secreted. Functionally, antimicrobial peptide with broad-spectrum activity against Gram-positive bacteria, Gram-negative bacteria, and fungi. Also inhibits clinical isolates, including methicillin-resistant S.aureus (MRSA) (MIC=32 uM), K.pneumoniae, C.albicans and C.parapsilosis. Displays minimal inhibitory concentration (MIC) values similar to minimal bactericidal concentrations (MBC), suggesting a disruptive mechanism mode of action associated with membrane lysis. In vitro, shows hemolytic activity against human red blood cells. The protein is Fungal defensin triintsin of Trichophyton interdigitale (strain MR816).